The sequence spans 161 residues: SsrA-binding protein (161 aa).

The protein belongs to the SmpB family.

The protein localises to the cytoplasm. Required for rescue of stalled ribosomes mediated by trans-translation. Binds to transfer-messenger RNA (tmRNA), required for stable association of tmRNA with ribosomes. tmRNA and SmpB together mimic tRNA shape, replacing the anticodon stem-loop with SmpB. tmRNA is encoded by the ssrA gene; the 2 termini fold to resemble tRNA(Ala) and it encodes a 'tag peptide', a short internal open reading frame. During trans-translation Ala-aminoacylated tmRNA acts like a tRNA, entering the A-site of stalled ribosomes, displacing the stalled mRNA. The ribosome then switches to translate the ORF on the tmRNA; the nascent peptide is terminated with the 'tag peptide' encoded by the tmRNA and targeted for degradation. The ribosome is freed to recommence translation, which seems to be the essential function of trans-translation. The polypeptide is SsrA-binding protein (Haemophilus influenzae (strain 86-028NP)).